A 266-amino-acid chain; its full sequence is Succinate dehydrogenase [ubiquinone] iron-sulfur subunit, mitochondrial (266 aa).

A mitochondrion-targeting transit peptide spans 1-20; sequence MLNVLLRRKAFCLVTKKGMA. Positions 36-127 constitute a 2Fe-2S ferredoxin-type domain; sequence FKVYRWNPDE…QLKIYPLPHM (92 aa). Residues Cys87, Cys92, Cys95, and Cys107 each coordinate [2Fe-2S] cluster. In terms of domain architecture, 4Fe-4S ferredoxin-type spans 169–199; that stretch reads DRKKLDGLYECILCACCSTSCPSYWWNQEQY. Positions 179, 182, and 185 each coordinate [4Fe-4S] cluster. Cys189 lines the [3Fe-4S] cluster pocket. Trp194 is a binding site for a ubiquinone. Cys236 and Cys242 together coordinate [3Fe-4S] cluster. Residue Cys246 participates in [4Fe-4S] cluster binding.

It belongs to the succinate dehydrogenase/fumarate reductase iron-sulfur protein family. As to quaternary structure, component of complex II composed of four subunits: a flavoprotein (FP), an iron-sulfur protein (IP), and a cytochrome b composed of a large and a small subunit. Requires [2Fe-2S] cluster as cofactor. [3Fe-4S] cluster is required as a cofactor. It depends on [4Fe-4S] cluster as a cofactor.

It is found in the mitochondrion inner membrane. The catalysed reaction is a quinone + succinate = fumarate + a quinol. Its pathway is carbohydrate metabolism; tricarboxylic acid cycle; fumarate from succinate (eukaryal route): step 1/1. Functionally, subunit of succinate dehydrogenase (SDH) that is involved in complex II of the mitochondrial electron transport chain and is responsible for transferring electrons from succinate to ubiquinone (coenzyme Q). SDH1 and SDH2 form the catalytic dimer. Electrons flow from succinate to the FAD bound to SDH1, and sequentially through the iron-sulfur clusters bound to SDH2 and enter the membrane dimer formed by SDH3 and SDH4. In Saccharomyces cerevisiae (strain ATCC 204508 / S288c) (Baker's yeast), this protein is Succinate dehydrogenase [ubiquinone] iron-sulfur subunit, mitochondrial (SDH2).